Reading from the N-terminus, the 430-residue chain is MAQKVNPISVRLNLNRSSDSSWFSDYYYGKLLYQDLNFRDYFGSIRPPTGNTFGFRLGRCIIHHFPKRTFIHVFFLDRLSQSRHQGLGAIPSVKLIRRINDNTVKQRNEVGIWPKKRYEYHDRLPSIQKIDQLLRVSDWMADIHSTFQSIWPKDENDDRRASEERYAFSRFAPSILVAVRAEKKKAIFGSEGDFFGFTGRAFLDYFVMQYFFNLKNQIQFDPMVNRSPVAQGVAKTSMIGKAIPAKTEQGTQSGESICQPRSTLYFDAIIFLRYARFRKATSLSSRYYYLKKMQSLFSNQTKTNTLIQPVKIASVYQSASLIAQEISWKLEQKKSFRQICRSIFKQIKKCPYVKGIRIGCSGRLNGAEIAKTECKKYGETSLHVFSDQIDYAKTQASTPYGILGVKVWVSYFLTQKKGTSCAISKTYKIS.

The protein belongs to the universal ribosomal protein uS3 family.

The protein resides in the mitochondrion. The chain is Small ribosomal subunit protein uS3m (RPS3) from Marchantia polymorpha (Common liverwort).